The chain runs to 190 residues: MIRFEIHGENLTITDAIRNYIEEKIGKLERYFNDVPNATAHVKVKTYQNSATKIEVTIPLKKVTLRAEERNDDLYAGIDLINNKLERQVRKYKTRVNRRNRNRGEQEAFASLPEEKEAVEIQNDENEADNEIEIIRAKNFSLKPMDSEEAVLQMDLLGHDFFIFTDRETDGTSIVYKRKDGKYGLIETTE.

It belongs to the HPF/YfiA ribosome-associated protein family. Long HPF subfamily. Interacts with 100S ribosomes.

The protein resides in the cytoplasm. Functionally, required for dimerization of active 70S ribosomes into 100S ribosomes in stationary phase; 100S ribosomes are translationally inactive and sometimes present during exponential growth. The protein is Ribosome hibernation promotion factor of Staphylococcus saprophyticus subsp. saprophyticus (strain ATCC 15305 / DSM 20229 / NCIMB 8711 / NCTC 7292 / S-41).